Here is a 323-residue protein sequence, read N- to C-terminus: Synaptonemal complex central element protein 1 (323 aa).

Positions Met1–Ala10 are enriched in polar residues. 2 disordered regions span residues Met1–Lys31 and Lys294–Lys323. Composition is skewed to basic and acidic residues over residues Asp20 to Lys31 and Ser313 to Lys323. Positions Gln25–Gln290 form a coiled coil.

This sequence belongs to the SYCE family. In terms of assembly, homodimer. Found in a complex with SYCP1 and SYCE2. Interacts with SYCP1, SYCE2 and SYCE3. Interacts with SIX6OS1.

It localises to the nucleus. The protein resides in the chromosome. In terms of biological role, major component of the transverse central element of synaptonemal complexes (SCS), formed between homologous chromosomes during meiotic prophase. Requires SYCP1 in order to be incorporated into the central element. May have a role in the synaptonemal complex assembly, stabilization and recombination. The sequence is that of Synaptonemal complex central element protein 1 (SYCE1) from Bos taurus (Bovine).